An 811-amino-acid chain; its full sequence is TLR4 interactor with leucine rich repeats (811 aa).

The first 25 residues, 1 to 25, serve as a signal peptide directing secretion; sequence MEGVGAVRFWLVVCGCLAFPPRAES. Residues 26-57 form the LRRNT domain; sequence VCPERCDCQHPQHLLCTNRGLRAVPKTSSLPS. Residues 26-696 lie on the Extracellular side of the membrane; the sequence is VCPERCDCQH…AGGRGGVDYQ (671 aa). LRR repeat units follow at residues 61-81, 84-105, 108-129, 132-153, 156-177, 180-201, 204-223, 230-251, 254-275, 278-298, 302-323, and 326-347; these read VLTY…DFHR, QLRR…TFEK, RLEE…TLAP, KLRI…SFEG, SLVK…VFAP, NLLY…AFTQ, KLRF…RHAA, SLST…VFQH, RLGL…AFWG, ALRE…TLLE, SLEA…TFGH, and RLRE…IFAA. A glycan (N-linked (GlcNAc...) asparagine) is linked at Asn-73. The LRRCT domain occupies 359 to 416; the sequence is NGWTCDCRLRGLKRWMGNWHSQGRLLTVFVQCRHPPALRGKYLDYLDDQLLQNGSCVD. N-linked (GlcNAc...) asparagine glycosylation is present at Asn-411. Disordered regions lie at residues 414 to 460 and 486 to 562; these read CVDP…QQRG and RRGP…QQGR. A compositionally biased stretch (polar residues) spans 421-430; that stretch reads PTAGSRQWPI. Composition is skewed to low complexity over residues 440–460 and 494–508; these read PPAG…QQRG and QSPS…APQS. The span at 510–519 shows a compositional bias: basic and acidic residues; that stretch reads DLHEKPERGR. Over residues 524 to 545 the composition is skewed to polar residues; sequence NLPQTEPTPTSEPASGTPSARD. Asn-589 carries N-linked (GlcNAc...) asparagine glycosylation. Residues 697 to 717 traverse the membrane as a helical segment; that stretch reads LLTLVLLAINALLVLLALAAW. The Cytoplasmic portion of the chain corresponds to 718-809; sequence GSRWLRRKLR…RREDHLLQRF (92 aa). A Phosphoserine modification is found at Ser-798.

As to quaternary structure, belongs to the lipopolysaccharide (LPS) receptor, a multi-protein complex containing at least CD14, MD-2 and TLR4. Interacts with TLR4; this interaction is greatly enhanced following LPS stimulation. Interacts with LPS. In terms of processing, N-glycolysaled. Highly expressed in cortical astrocytes and in cerebellar granule neurons.

It localises to the membrane. Functionally, component of the TLR4 signaling complex. Mediates the innate immune response to bacterial lipopolysaccharide (LPS) leading to cytokine secretion and the inflammatory response. The chain is TLR4 interactor with leucine rich repeats (Tril) from Rattus norvegicus (Rat).